The sequence spans 336 residues: Biotin synthase (336 aa).

The 234-residue stretch at 55-288 folds into the Radical SAM core domain; it reads GEAASLHACS…RTIIKFAAGR (234 aa). Residues cysteine 73, cysteine 77, and cysteine 80 each coordinate [4Fe-4S] cluster. The [2Fe-2S] cluster site is built by cysteine 152, cysteine 213, and lysine 283.

This sequence belongs to the radical SAM superfamily. Biotin synthase family. Homodimer. Requires [4Fe-4S] cluster as cofactor. [2Fe-2S] cluster serves as cofactor.

The catalysed reaction is (4R,5S)-dethiobiotin + (sulfur carrier)-SH + 2 reduced [2Fe-2S]-[ferredoxin] + 2 S-adenosyl-L-methionine = (sulfur carrier)-H + biotin + 2 5'-deoxyadenosine + 2 L-methionine + 2 oxidized [2Fe-2S]-[ferredoxin]. The protein operates within cofactor biosynthesis; biotin biosynthesis; biotin from 7,8-diaminononanoate: step 2/2. Functionally, catalyzes the conversion of dethiobiotin (DTB) to biotin by the insertion of a sulfur atom into dethiobiotin via a radical-based mechanism. The chain is Biotin synthase from Chlorobium limicola (strain DSM 245 / NBRC 103803 / 6330).